The primary structure comprises 289 residues: E3 ubiquitin-protein ligase MARCHF8 (289 aa).

Positions 1–68 (MNMPLHQISA…SAPVSSFPRT (68 aa)) are disordered. Positions 25–39 (KTKEKEREEQNEKTL) are enriched in basic and acidic residues. The span at 50-64 (SKAGGSSVASAPVSS) shows a compositional bias: low complexity. The segment at 70-131 (VTPSNQDICR…ELCKYEFIME (62 aa)) adopts an RING-CH-type zinc-finger fold. Positions 78, 81, 95, 97, 105, 108, 121, and 124 each coordinate Zn(2+). 2 helical membrane passes run 155–175 (CSVT…YVLI) and 195–215 (FWTK…FMYV).

As to quaternary structure, interacts with CD86.

The protein localises to the golgi apparatus membrane. It is found in the endoplasmic reticulum membrane. It localises to the cytoplasmic vesicle membrane. Its subcellular location is the lysosome membrane. The protein resides in the early endosome membrane. The catalysed reaction is S-ubiquitinyl-[E2 ubiquitin-conjugating enzyme]-L-cysteine + [acceptor protein]-L-lysine = [E2 ubiquitin-conjugating enzyme]-L-cysteine + N(6)-ubiquitinyl-[acceptor protein]-L-lysine.. Its pathway is protein modification; protein ubiquitination. Its function is as follows. E3 ubiquitin-protein ligase that plays several important roles in innate immunity and adaptive immunity. Mediates ubiquitination of CD86 and MHC class II proteins, such as HLA-DR alpha and beta, and promotes their subsequent endocytosis and sorting to lysosomes via multivesicular bodies. Possesses a very broad antiviral activity by specifically inactivating different viral fusion proteins. Targets and ubiquitinates cytoplasmic lysine residues of viral envelope glycoproteins with single transmembrane domains leading to their lysosomal degradation. Mediates the regulation of constitutive ubiquitination and trafficking of the viral restriction factor BST2 within the endocytic pathway. Plays a role in maintenance of immune tolerance to self by promoting the turnover and proteasomal degradation of PD-L1/CD274 via ubiquitination. Catalyzes the 'Lys-63'-linked polyubiquitylation of cGAS thereby inhibiting its DNA binding ability and impairing its antiviral innate immunity. Negatively regulates IL7-mediated T-cell homeostasis by mediating 'Lys-27'-linked polyubiquitination of IL7R, leading to its lysosomal degradation. This Bos taurus (Bovine) protein is E3 ubiquitin-protein ligase MARCHF8 (MARCHF8).